The chain runs to 72 residues: uncharacterized protein (72 aa).

Residues 33–53 (VCIFFSLIFFFFFFFFCVNWG) form a helical membrane-spanning segment.

The protein resides in the membrane. This is an uncharacterized protein from Dictyostelium discoideum (Social amoeba).